A 581-amino-acid chain; its full sequence is Multicopper oxidase LPR1 (581 aa).

The first 28 residues, methionine 1 to glycine 28, serve as a signal peptide directing secretion. Histidine 148, histidine 150, histidine 196, and histidine 198 together coordinate Cu cation. N-linked (GlcNAc...) asparagine glycosylation is found at asparagine 254, asparagine 298, asparagine 386, and asparagine 458. Residues proline 283–proline 352 enclose the Plastocyanin-like domain. Cu cation contacts are provided by histidine 464, histidine 467, and histidine 469. A glycan (N-linked (GlcNAc...) asparagine) is linked at asparagine 546. The Cu cation site is built by histidine 562, cysteine 563, histidine 564, histidine 568, and methionine 573.

The protein belongs to the multicopper oxidase family. The cofactor is Cu cation.

The protein localises to the endoplasmic reticulum membrane. Multicopper oxidase that may be involved in copper homeostasis and oxidative stress response, and that is necessary for root growth inhibition by low phosphate conditions. Functions together with LPR2 and PDR2 in a common pathway that adjusts root meristem activity to phosphate availability. Oxidizes the substrate 2,2'-azinobis-(3-ethylbenzthiazoline-6-sulphonate) in vitro. The chain is Multicopper oxidase LPR1 (LPR1) from Arabidopsis thaliana (Mouse-ear cress).